The chain runs to 334 residues: Trans-3-hydroxy-L-proline dehydratase (334 aa).

The active-site Proton acceptor is the Cys-91. Substrate-binding positions include Gly-92–His-93, Asp-250, and Gly-255–Thr-256.

This sequence belongs to the proline racemase family.

The catalysed reaction is trans-3-hydroxy-L-proline = 1-pyrroline-2-carboxylate + H2O. Its function is as follows. Catalyzes the dehydration of trans-3-hydroxy-L-proline (t3LHyp) to Delta(1)-pyrroline-2-carboxylate (Pyr2C). Is likely involved in a degradation pathway that converts t3LHyp to L-proline, which allows B.cereus to grow on t3LHyp as a sole carbon source. Displays no proline racemase activity. In Bacillus cereus (strain ATCC 14579 / DSM 31 / CCUG 7414 / JCM 2152 / NBRC 15305 / NCIMB 9373 / NCTC 2599 / NRRL B-3711), this protein is Trans-3-hydroxy-L-proline dehydratase.